The sequence spans 346 residues: Peroxidase 37 (346 aa).

The N-terminal stretch at 1–22 is a signal peptide; sequence MHSSLIKLGFLLLLIQVSLSHA. Q23 carries the post-translational modification Pyrrolidone carboxylic acid. Cystine bridges form between C33/C113, C66/C71, C119/C323, and C199/C231. H64 (proton acceptor) is an active-site residue. Residues D65, V68, G70, D72, and S74 each coordinate Ca(2+). Residue N79 is glycosylated (N-linked (GlcNAc...) asparagine). P161 lines the substrate pocket. Heme b is bound at residue H192. T193 serves as a coordination point for Ca(2+). N-linked (GlcNAc...) asparagine glycosylation is found at N208 and N236. The Ca(2+) site is built by D244, T247, and D252.

This sequence belongs to the peroxidase family. Classical plant (class III) peroxidase subfamily. Heme b is required as a cofactor. The cofactor is Ca(2+).

Its subcellular location is the secreted. The protein resides in the vacuole. It catalyses the reaction 2 a phenolic donor + H2O2 = 2 a phenolic radical donor + 2 H2O. Functionally, removal of H(2)O(2), oxidation of toxic reductants, biosynthesis and degradation of lignin, suberization, auxin catabolism, response to environmental stresses such as wounding, pathogen attack and oxidative stress. These functions might be dependent on each isozyme/isoform in each plant tissue. This Arabidopsis thaliana (Mouse-ear cress) protein is Peroxidase 37 (PER37).